The following is a 79-amino-acid chain: UPF0154 protein SAG1601 (79 aa).

The chain crosses the membrane as a helical span at residues 5-25 (IWILLIIVALFGGLVGGIFIA).

It belongs to the UPF0154 family.

The protein localises to the membrane. This chain is UPF0154 protein SAG1601, found in Streptococcus agalactiae serotype V (strain ATCC BAA-611 / 2603 V/R).